A 277-amino-acid polypeptide reads, in one-letter code: Lectin 1 (277 aa).

The first 30 residues, 1 to 30 (MSFSSSNFYVILSISLTVFILLFNINKVNS), serve as a signal peptide directing secretion. N-linked (GlcNAc...) asparagine glycosylation occurs at Asn-143. Mn(2+)-binding residues include Glu-152 and Asp-154. Positions 154, 158, and 161 each coordinate Ca(2+). Mn(2+) contacts are provided by Asp-161 and His-167. N-linked (GlcNAc...) asparagine glycosylation occurs at Asn-269.

This sequence belongs to the leguminous lectin family.

Lectin that may be involved in a cell recognition process. The sequence is that of Lectin 1 (LEC1) from Medicago truncatula (Barrel medic).